Reading from the N-terminus, the 183-residue chain is UPF0340 protein LCA_1354 (183 aa).

Belongs to the UPF0340 family.

This chain is UPF0340 protein LCA_1354, found in Latilactobacillus sakei subsp. sakei (strain 23K) (Lactobacillus sakei subsp. sakei).